The sequence spans 277 residues: MNSENASLFRNILNDTENLVQPLTQDESRLALFESLVQSDQLLVEKIEKWEKKVSKFTENSKSEKRKLQLELFQEIIDLKKCIAFKPIIGKNAIDNNISDLKKNLHSNKKLEAVLKEELHQIKKFSSDLQSLKSSMGERQKQQAAMSRRGKKSIIHSAIIQEKERYEKESQELFTFLDGFLDEHAPSLLEGAQASIDKNRPGKNQPSLNFENISKKDLTEEFKQVIENLMNNSIIPGSPYIEVKNERIVSFLVLASLCTVDPQDPSKVKLIPFSDEI.

Positions 96–138 (NNISDLKKNLHSNKKLEAVLKEELHQIKKFSSDLQSLKSSMGE) form a coiled coil.

It belongs to the CENP-K/MCM22 family. In terms of assembly, component of the inner kinetochore constitutive centromere-associated network (CCAN) (also known as central kinetochore Sim4 complex in fission yeast), which is composed of at least cnl2, cnp3, cnp20, fta1, fta2, fta3, fta4, fta6, fta7, mal2, mhf1, mhf2, mis6, mis15, mis17, sim4 and wip1. Interacts with mis6 and dad1.

The protein resides in the nucleus. The protein localises to the chromosome. It is found in the centromere. Functionally, component of the kinetochore, a multiprotein complex that assembles on centromeric DNA and attaches chromosomes to spindle microtubules, mediating chromosome segregation and sister chromatid segregation during meiosis and mitosis. Component of the inner kinetochore constitutive centromere-associated network (CCAN), which serves as a structural platform for outer kinetochore assembly. In Schizosaccharomyces pombe (strain 972 / ATCC 24843) (Fission yeast), this protein is Inner kinetochore subunit sim4 (sim4).